The following is a 1321-amino-acid chain: Indole-3-acetaldehyde oxidase (1321 aa).

Positions 1 to 90 (MSLVFAINGQ…HCNITTSEGL (90 aa)) constitute a 2Fe-2S ferredoxin-type domain. [2Fe-2S] cluster is bound by residues C42, C47, and C50. The 190-residue stretch at 215 to 404 (VDSGMYRWCS…LSIEIPFWHS (190 aa)) folds into the FAD-binding PCMH-type domain.

Belongs to the xanthine dehydrogenase family. In terms of assembly, aldehyde oxidases (AO) are homodimers and heterodimers of AO subunits. AO-beta is a AAO1-AAO2 heterodimer; AO-gamma is a AAO2 homodimer. AAO2 also forms a dimer with AAO3. The cofactor is [2Fe-2S] cluster. FAD serves as cofactor. Mo-molybdopterin is required as a cofactor. As to expression, weakly expressed in roots, leaves and seedlings. In seedlings, mostly expressed in lower part of hypocotyls. Detectable in seeds and mature siliques at low levels.

The protein localises to the cytoplasm. It carries out the reaction indole-3-acetaldehyde + O2 + H2O = (indol-3-yl)acetate + H2O2 + H(+). With respect to regulation, strongly inhibited by iodoacetate, potassium cyanide (KCN), 2-mercaptoethanol, dithiothreitol (DTT), p-chloromercuribenzoate, menadione and estradiol. Weakly inhibited by 4'-(9-acridinylamino)methanesulfon-m-anisidine (mAMSA) and tritonX-100. Not affected by allopurinol. Its function is as follows. In higher plant aldehyde oxidases (AO) appear to be homo- and heterodimeric assemblies of AO subunits with probably different physiological functions. In vitro, AO-gamma uses heptaldehyde, benzaldehyde, naphthaldehyde and cinnamaldehyde as substrates; AO-beta uses indole-3-acetaldehyde (IAAld), indole-3-aldehyde (IAld) and naphtaldehyde; the AAO2-AAO3 dimer uses abscisic aldehyde. In Arabidopsis thaliana (Mouse-ear cress), this protein is Indole-3-acetaldehyde oxidase (AAO2).